Here is a 179-residue protein sequence, read N- to C-terminus: Ribosome maturation factor RimP (179 aa).

This sequence belongs to the RimP family.

Its subcellular location is the cytoplasm. Required for maturation of 30S ribosomal subunits. The sequence is that of Ribosome maturation factor RimP from Prosthecochloris aestuarii (strain DSM 271 / SK 413).